Here is a 186-residue protein sequence, read N- to C-terminus: ATP synthase subunit delta (186 aa).

This sequence belongs to the ATPase delta chain family. F-type ATPases have 2 components, F(1) - the catalytic core - and F(0) - the membrane proton channel. F(1) has five subunits: alpha(3), beta(3), gamma(1), delta(1), epsilon(1). F(0) has three main subunits: a(1), b(2) and c(10-14). The alpha and beta chains form an alternating ring which encloses part of the gamma chain. F(1) is attached to F(0) by a central stalk formed by the gamma and epsilon chains, while a peripheral stalk is formed by the delta and b chains.

Its subcellular location is the cell inner membrane. Functionally, f(1)F(0) ATP synthase produces ATP from ADP in the presence of a proton or sodium gradient. F-type ATPases consist of two structural domains, F(1) containing the extramembraneous catalytic core and F(0) containing the membrane proton channel, linked together by a central stalk and a peripheral stalk. During catalysis, ATP synthesis in the catalytic domain of F(1) is coupled via a rotary mechanism of the central stalk subunits to proton translocation. Its function is as follows. This protein is part of the stalk that links CF(0) to CF(1). It either transmits conformational changes from CF(0) to CF(1) or is implicated in proton conduction. The chain is ATP synthase subunit delta from Brucella abortus (strain S19).